The primary structure comprises 82 residues: Exodeoxyribonuclease 7 small subunit (82 aa).

It belongs to the XseB family. As to quaternary structure, heterooligomer composed of large and small subunits.

Its subcellular location is the cytoplasm. The catalysed reaction is Exonucleolytic cleavage in either 5'- to 3'- or 3'- to 5'-direction to yield nucleoside 5'-phosphates.. Functionally, bidirectionally degrades single-stranded DNA into large acid-insoluble oligonucleotides, which are then degraded further into small acid-soluble oligonucleotides. This is Exodeoxyribonuclease 7 small subunit from Pectobacterium carotovorum subsp. carotovorum (strain PC1).